The primary structure comprises 354 residues: Putative cinnamyl alcohol dehydrogenase 4 (354 aa).

8 residues coordinate Zn(2+): cysteine 47, histidine 69, glutamate 70, cysteine 100, cysteine 103, cysteine 106, cysteine 114, and cysteine 163. NADP(+) contacts are provided by residues threonine 167, glycine 188–glycine 193, serine 211–lysine 216, threonine 251, and serine 297–threonine 299.

It belongs to the zinc-containing alcohol dehydrogenase family. In terms of assembly, homodimer. Zn(2+) is required as a cofactor.

The catalysed reaction is (E)-cinnamyl alcohol + NADP(+) = (E)-cinnamaldehyde + NADPH + H(+). It carries out the reaction (E)-coniferol + NADP(+) = (E)-coniferaldehyde + NADPH + H(+). The enzyme catalyses (E)-sinapyl alcohol + NADP(+) = (E)-sinapaldehyde + NADPH + H(+). It catalyses the reaction (E)-4-coumaroyl alcohol + NADP(+) = (E)-4-coumaraldehyde + NADPH + H(+). The catalysed reaction is (E)-caffeyl alcohol + NADP(+) = (E)-caffeyl aldehyde + NADPH + H(+). It functions in the pathway aromatic compound metabolism; phenylpropanoid biosynthesis. Functionally, involved in lignin biosynthesis. Catalyzes the final step specific for the production of lignin monomers. Catalyzes the NADPH-dependent reduction of coniferaldehyde, 5-hydroxyconiferaldehyde, sinapaldehyde, 4-coumaraldehyde and caffeyl aldehyde to their respective alcohols. This chain is Putative cinnamyl alcohol dehydrogenase 4, found in Oryza sativa subsp. japonica (Rice).